Reading from the N-terminus, the 99-residue chain is Nucleoid-associated protein EbfC (99 aa).

The protein belongs to the YbaB/EbfC family. Homodimer.

Its subcellular location is the cytoplasm. It is found in the nucleoid. Functionally, binds to DNA and alters its conformation. May be involved in regulation of gene expression, nucleoid organization and DNA protection. This chain is Nucleoid-associated protein EbfC, found in Borrelia turicatae (strain 91E135).